The sequence spans 642 residues: Zinc finger protein 14 (642 aa).

Positions 4 to 76 constitute a KRAB domain; it reads VSFEDVAVNF…MVERLCESRK (73 aa). The segment at 103-125 adopts a C2H2-type 1 zinc-finger fold; that stretch reads HECSFCGRDFMHHSSLNRHMRSH. A C2H2-type 2; degenerate zinc finger spans residues 141–163; sequence RKHKAVEKTFSYHHCFRKHERTH. The C2H2-type 3 zinc finger occupies 169-191; sequence YECKQCGKAFIYYQPFQRHERTH. Residues 197–217 form a C2H2-type 4; atypical zinc finger; sequence YECKQCGKTFIYYQSFQQHAH. C2H2-type zinc fingers lie at residues 223 to 245, 251 to 273, 279 to 301, 307 to 329, 335 to 357, 363 to 385, 391 to 413, 419 to 441, 447 to 469, 475 to 497, 503 to 525, 531 to 553, 559 to 581, 587 to 609, and 615 to 637; these read YECKQCGKAFICYQSFQRHERTH, YECKQCGKAFSCPTYFRTHERTH, YKCKECGKAFSFLSSFRRHKRTH, YECKECGKAFFYSASFRAHVITH, YKCKECGKAFNSSNSCRVHERTH, YECKQCGKSFSWSISLRLHERTH, YECKQCHKTFSFSSSLREHETTH, YECKQCGKTFSFSSSLQRHERTH, YECKQCGKAFRCSSYFRIHERSH, YECKQCGKVFIRSSSFRLHERTH, YECKLCSKTFSFSSSLREHEKIH, FECKQCGKAFLRSSQIRLHERTH, YQCKQCGKAFISSSKFRMHERTH, YRCKQCGKAFRFSSSVRIHERSH, and YECKQCGKAFISSSHFRLHERTH.

The protein belongs to the krueppel C2H2-type zinc-finger protein family.

The protein localises to the nucleus. May be involved in transcriptional regulation. The polypeptide is Zinc finger protein 14 (ZNF14) (Pongo abelii (Sumatran orangutan)).